Consider the following 289-residue polypeptide: Segregation and condensation protein A (289 aa).

Over residues 1–18 the composition is skewed to basic and acidic residues; the sequence is MSEDRRSPTDEAPREGEL. The tract at residues 1 to 24 is disordered; sequence MSEDRRSPTDEAPREGELPRSPGD.

This sequence belongs to the ScpA family. Component of the Structural Maintenance of Chromosome (SMC) condensin-like complex composed of ScpA, ScpB and the Smc homodimer. ScpA and ScpB bind to the head domain of Smc. The presence of the three proteins is required for the association of the complex with DNA.

It localises to the cytoplasm. Its function is as follows. A conditionally essential component of the chromosome segregation machinery. Participates in chromosomal partition during cell division. Important for positioning of ParB-parS complexes (ori of replication) and of the ter replication site, as well as for segration of the ParB-parS complex and thus chromosome segregation. May act via the formation of a condensin-like complex containing Smc, ScpA and ScpB that pulls DNA away from mid-cell into both cell halves. This chain is Segregation and condensation protein A, found in Myxococcus xanthus (strain DK1622).